The following is a 356-amino-acid chain: Protein-arginine kinase (356 aa).

The region spanning 24–254 is the Phosphagen kinase C-terminal domain; it reads IVLSSRIRLA…MQLIQQERAA (231 aa). Residues 27-31, His91, Arg125, 176-180, and 207-212 each bind ATP; these read SSRIR, RASVM, and RGIYGE. The short motif at 337 to 342 is the RDXXRA motif of the pArg binding pocket involved in allosteric regulation element; it reads RDERRA.

Belongs to the ATP:guanido phosphotransferase family.

It catalyses the reaction L-arginyl-[protein] + ATP = N(omega)-phospho-L-arginyl-[protein] + ADP + H(+). With respect to regulation, appears to be allosterically activated by the binding of pArg-containing polypeptides to the pArg-binding pocket localized in the C-terminal domain of McsB. In terms of biological role, catalyzes the specific phosphorylation of arginine residues in a large number of proteins. Is part of the bacterial stress response system. Protein arginine phosphorylation has a physiologically important role and is involved in the regulation of many critical cellular processes, such as protein homeostasis, motility, competence, and stringent and stress responses, by regulating gene expression and protein activity. The polypeptide is Protein-arginine kinase (Halalkalibacterium halodurans (strain ATCC BAA-125 / DSM 18197 / FERM 7344 / JCM 9153 / C-125) (Bacillus halodurans)).